The sequence spans 231 residues: tRNA (guanine-N(7)-)-methyltransferase (231 aa).

The S-adenosyl-L-methionine site is built by Glu62, Glu87, Asp114, and Asp137. Residue Asp137 is part of the active site. Substrate contacts are provided by residues Lys141, Asp173, and 210 to 213 (TKFE).

It belongs to the class I-like SAM-binding methyltransferase superfamily. TrmB family.

The catalysed reaction is guanosine(46) in tRNA + S-adenosyl-L-methionine = N(7)-methylguanosine(46) in tRNA + S-adenosyl-L-homocysteine. It functions in the pathway tRNA modification; N(7)-methylguanine-tRNA biosynthesis. Catalyzes the formation of N(7)-methylguanine at position 46 (m7G46) in tRNA. The chain is tRNA (guanine-N(7)-)-methyltransferase from Methylococcus capsulatus (strain ATCC 33009 / NCIMB 11132 / Bath).